The primary structure comprises 446 residues: Na(+)-translocating NADH-quinone reductase subunit A (446 aa).

It belongs to the NqrA family. As to quaternary structure, composed of six subunits; NqrA, NqrB, NqrC, NqrD, NqrE and NqrF.

It carries out the reaction a ubiquinone + n Na(+)(in) + NADH + H(+) = a ubiquinol + n Na(+)(out) + NAD(+). With respect to regulation, this reaction is tightly coupled to the Na(+) pumping activity and specifically requires Na(+) for activity. Inhibited by korormicin and 2-N-heptyl-4-hydroxyquinoline N-oxide (HQNO). Its function is as follows. NQR complex catalyzes the reduction of ubiquinone-1 to ubiquinol by two successive reactions, coupled with the transport of Na(+) ions from the cytoplasm to the periplasm. NqrA to NqrE are probably involved in the second step, the conversion of ubisemiquinone to ubiquinol. This is Na(+)-translocating NADH-quinone reductase subunit A from Vibrio alginolyticus.